The sequence spans 119 residues: Protein TusC (119 aa).

Belongs to the DsrF/TusC family. In terms of assembly, heterohexamer, formed by a dimer of trimers. The hexameric TusBCD complex contains 2 copies each of TusB, TusC and TusD. The TusBCD complex interacts with TusE.

Its subcellular location is the cytoplasm. In terms of biological role, part of a sulfur-relay system required for 2-thiolation of 5-methylaminomethyl-2-thiouridine (mnm(5)s(2)U) at tRNA wobble positions. The protein is Protein TusC of Buchnera aphidicola subsp. Acyrthosiphon pisum (strain APS) (Acyrthosiphon pisum symbiotic bacterium).